Here is a 1390-residue protein sequence, read N- to C-terminus: DNA-directed RNA polymerase subunit beta' (1390 aa).

Zn(2+)-binding residues include cysteine 73, cysteine 75, cysteine 88, and cysteine 91. Mg(2+)-binding residues include aspartate 464, aspartate 466, and aspartate 468. Residues cysteine 810, cysteine 884, cysteine 891, and cysteine 894 each coordinate Zn(2+). Residues 1365 to 1390 (EKKEQKIYGNGEEPAKEQKWIPQAGT) are disordered.

The protein belongs to the RNA polymerase beta' chain family. As to quaternary structure, the RNAP catalytic core consists of 2 alpha, 1 beta, 1 beta' and 1 omega subunit. When a sigma factor is associated with the core the holoenzyme is formed, which can initiate transcription. Mg(2+) is required as a cofactor. The cofactor is Zn(2+).

The catalysed reaction is RNA(n) + a ribonucleoside 5'-triphosphate = RNA(n+1) + diphosphate. DNA-dependent RNA polymerase catalyzes the transcription of DNA into RNA using the four ribonucleoside triphosphates as substrates. This Methylacidiphilum infernorum (isolate V4) (Methylokorus infernorum (strain V4)) protein is DNA-directed RNA polymerase subunit beta'.